The primary structure comprises 125 residues: Splicing factor 3B subunit 6 (125 aa).

The interaction with pre-mRNA branch site stretch occupies residues 16–29; it reads EVNRILYIRNLPYK. An RRM domain is found at 19–94; sequence RILYIRNLPY…RYLVVLYYNA (76 aa). Residue lysine 29 is modified to N6-acetyllysine; alternate. Lysine 29 participates in a covalent cross-link: Glycyl lysine isopeptide (Lys-Gly) (interchain with G-Cter in SUMO2); alternate. Residue lysine 41 is modified to N6-acetyllysine.

As to quaternary structure, component of the 17S U2 SnRNP complex, a ribonucleoprotein complex that contains small nuclear RNA (snRNA) U2 and a number of specific proteins. Part of the SF3B subcomplex of the 17S U2 SnRNP complex. SF3B associates with the splicing subcomplex SF3A and a 12S RNA unit to form the U2 small nuclear ribonucleoproteins complex (U2 snRNP). Within the SF3B complex interacts directly with SF3B1. Component of the minor spliceosome, which splices U12-type introns.

The protein resides in the nucleus. Functionally, component of the 17S U2 SnRNP complex of the spliceosome, a large ribonucleoprotein complex that removes introns from transcribed pre-mRNAs. The 17S U2 SnRNP complex (1) directly participates in early spliceosome assembly and (2) mediates recognition of the intron branch site during pre-mRNA splicing by promoting the selection of the pre-mRNA branch-site adenosine, the nucleophile for the first step of splicing. Within the 17S U2 SnRNP complex, SF3B6 is part of the SF3B subcomplex, which is required for 'A' complex assembly formed by the stable binding of U2 snRNP to the branchpoint sequence in pre-mRNA. Sequence independent binding of SF3A and SF3B subcomplexes upstream of the branch site is essential, it may anchor U2 snRNP to the pre-mRNA. Within the 17S U2 SnRNP complex, SF3B6 directly contacts the pre-mRNA branch site adenosine for the first catalytic step of splicing. SF3B6 stabilizes the intron branch site-U2 snRNA duplex, thereby promoting-binding of introns with poor sequence complementarity. Also acts as a component of the minor spliceosome, which is involved in the splicing of U12-type introns in pre-mRNAs. The sequence is that of Splicing factor 3B subunit 6 (Sf3b6) from Mus musculus (Mouse).